A 217-amino-acid chain; its full sequence is Small ribosomal subunit protein uS3 (217 aa).

Residues 40 to 110 form the KH type-2 domain; that stretch reads IRDLINKWFN…EVYINIHEVR (71 aa).

The protein belongs to the universal ribosomal protein uS3 family. In terms of assembly, part of the 30S ribosomal subunit. Forms a tight complex with proteins S10 and S14.

Its function is as follows. Binds the lower part of the 30S subunit head. Binds mRNA in the 70S ribosome, positioning it for translation. The polypeptide is Small ribosomal subunit protein uS3 (Rickettsia typhi (strain ATCC VR-144 / Wilmington)).